A 156-amino-acid chain; its full sequence is Small ribosomal subunit protein uS7 (156 aa).

The protein belongs to the universal ribosomal protein uS7 family. As to quaternary structure, part of the 30S ribosomal subunit. Contacts proteins S9 and S11.

In terms of biological role, one of the primary rRNA binding proteins, it binds directly to 16S rRNA where it nucleates assembly of the head domain of the 30S subunit. Is located at the subunit interface close to the decoding center, probably blocks exit of the E-site tRNA. This chain is Small ribosomal subunit protein uS7, found in Streptococcus agalactiae serotype Ia (strain ATCC 27591 / A909 / CDC SS700).